A 48-amino-acid polypeptide reads, in one-letter code: ATP synthase protein 8 (48 aa).

The chain crosses the membrane as a helical span at residues 13 to 32 (LTYGFLLMITLLILFSQFFL).

This sequence belongs to the ATPase protein 8 family. F-type ATPases have 2 components, CF(1) - the catalytic core - and CF(0) - the membrane proton channel. In yeast, the dimeric form of ATP synthase consists of 17 polypeptides: alpha, beta, gamma, delta, epsilon, 4 (B), 5 (OSCP), 6 (A), 8, 9 (C), d, E (Tim11), f, g, h, i/j and k.

Its subcellular location is the mitochondrion membrane. Its function is as follows. Mitochondrial membrane ATP synthase (F(1)F(0) ATP synthase or Complex V) produces ATP from ADP in the presence of a proton gradient across the membrane which is generated by electron transport complexes of the respiratory chain. F-type ATPases consist of two structural domains, F(1) - containing the extramembraneous catalytic core and F(0) - containing the membrane proton channel, linked together by a central stalk and a peripheral stalk. During catalysis, ATP synthesis in the catalytic domain of F(1) is coupled via a rotary mechanism of the central stalk subunits to proton translocation. Part of the complex F(0) domain. Minor subunit located with subunit a in the membrane. The sequence is that of ATP synthase protein 8 (ATP8) from Saccharomyces cerevisiae (strain ATCC 204508 / S288c) (Baker's yeast).